We begin with the raw amino-acid sequence, 124 residues long: Small ribosomal subunit protein uS12 (124 aa).

A disordered region spans residues 1 to 27; it reads MPTINQLIRKPRKSQTEKTASPALQNC. Residues 17-27 show a composition bias toward polar residues; sequence EKTASPALQNC. Aspartate 89 is subject to 3-methylthioaspartic acid.

The protein belongs to the universal ribosomal protein uS12 family. In terms of assembly, part of the 30S ribosomal subunit. Contacts proteins S8 and S17. May interact with IF1 in the 30S initiation complex.

In terms of biological role, with S4 and S5 plays an important role in translational accuracy. Its function is as follows. Interacts with and stabilizes bases of the 16S rRNA that are involved in tRNA selection in the A site and with the mRNA backbone. Located at the interface of the 30S and 50S subunits, it traverses the body of the 30S subunit contacting proteins on the other side and probably holding the rRNA structure together. The combined cluster of proteins S8, S12 and S17 appears to hold together the shoulder and platform of the 30S subunit. This is Small ribosomal subunit protein uS12 from Borreliella afzelii (strain PKo) (Borrelia afzelii).